We begin with the raw amino-acid sequence, 175 residues long: NADH-quinone oxidoreductase subunit I (175 aa).

4Fe-4S ferredoxin-type domains lie at 64-93 (KRDE…IIAD) and 110-139 (SLYE…LTEE). [4Fe-4S] cluster is bound by residues Cys73, Cys76, Cys79, Cys83, Cys119, Cys122, Cys125, and Cys129.

This sequence belongs to the complex I 23 kDa subunit family. As to quaternary structure, NDH-1 is composed of 14 different subunits. Subunits NuoA, H, J, K, L, M, N constitute the membrane sector of the complex. [4Fe-4S] cluster is required as a cofactor.

It is found in the cell inner membrane. The enzyme catalyses a quinone + NADH + 5 H(+)(in) = a quinol + NAD(+) + 4 H(+)(out). Functionally, NDH-1 shuttles electrons from NADH, via FMN and iron-sulfur (Fe-S) centers, to quinones in the respiratory chain. The immediate electron acceptor for the enzyme in this species is believed to be ubiquinone. Couples the redox reaction to proton translocation (for every two electrons transferred, four hydrogen ions are translocated across the cytoplasmic membrane), and thus conserves the redox energy in a proton gradient. The polypeptide is NADH-quinone oxidoreductase subunit I (Cytophaga hutchinsonii (strain ATCC 33406 / DSM 1761 / CIP 103989 / NBRC 15051 / NCIMB 9469 / D465)).